The sequence spans 160 residues: Large ribosomal subunit protein uL16 (160 aa).

The protein belongs to the universal ribosomal protein uL16 family. Part of the 50S ribosomal subunit.

Its function is as follows. Binds 23S rRNA and is also seen to make contacts with the A and possibly P site tRNAs. The chain is Large ribosomal subunit protein uL16 from Prochlorococcus marinus (strain MIT 9515).